Consider the following 725-residue polypeptide: Kelch domain-containing protein SSO1033 (725 aa).

The first 28 residues, 1 to 28, serve as a signal peptide directing secretion; that stretch reads MKYGNMKKWAPLILFLFSLLLLQGISLH. Kelch repeat units follow at residues 59–100, 101–145, 146–199, 201–248, 250–297, and 299–342; these read SLYI…VYNN, TIYV…VYNN, AIYV…FNGT, LIIV…YYRG, LFIV…QVGN, and LYLA…VTLG. Fibronectin type-III domains lie at 323–410, 411–504, 505–583, and 585–665; these read PPLP…TPAS, VPNP…TKAS, VFAF…VVYY, and PPAS…TGDY.

This is Kelch domain-containing protein SSO1033 from Saccharolobus solfataricus (strain ATCC 35092 / DSM 1617 / JCM 11322 / P2) (Sulfolobus solfataricus).